The primary structure comprises 205 residues: Protein Nef (205 aa).

Gly2 is lipidated: N-myristoyl glycine; by host. At Ser6 the chain carries Phosphoserine; by host. Positions Glu62 to Glu65 are acidic; interacts with host PACS1 and PACS2; stabilizes the interaction of NEF/MHC-I with host AP1M1; necessary for MHC-I internalization. Positions Pro69–Pro78 are SH3-binding; interaction with Src family tyrosine kinases. Positions Pro72–Pro75 match the PxxP; stabilizes the interaction of NEF/MHC-I with host AP1M1; necessary for MHC-I internalization motif. Residues Asp108–Trp124 are mediates dimerization, Nef-PTE1 interaction. The tract at residues Val148–Val180 is binding to ATP6V1H. The Dileucine internalization motif; necessary for CD4 internalization signature appears at Leu164–Leu165. Positions Glu174–Asp175 match the Diacidic; necessary for CD4 internalization motif.

The protein belongs to the lentivirus primate group Nef protein family. As to quaternary structure, monomer; cytosolic form. Homodimer; membrane bound form. Interacts with Nef associated p21-activated kinase (PAK2); this interaction activates PAK2. Associates with the Nef-MHC-I-AP1 complex; this complex is required for MHC-I internalization. Interacts (via C-terminus) with host PI3-kinase. Interacts with host PACS1; this interaction seems to be weak. Interacts with host PACS2. Interacts with host LCK and MAPK3; these interactions inhibit the kinase activity of the latter. Interacts with host ATP6V1H; this interaction may play a role in CD4 endocytosis. Associates with the CD4-Nef-AP2 complex; this complex is required for CD4 internalization. Interacts with host AP2 subunit alpha and AP2 subunit sigma2. Interacts with TCR-zeta chain; this interaction up-regulates the Fas ligand (FasL) surface expression. Interacts with host HCK, LYN, and SRC; these interactions activate the Src family kinases. Interacts with MAP3K5; this interaction inhibits the Fas and TNFR-mediated death signals. Interacts with beta-COP and PTE1. Interacts with human RACK1; this increases Nef phosphorylation by PKC. Interacts with TP53; this interaction decreases the half-life of TP53, protecting the infected cell against p53-mediated apoptosis. Post-translationally, the virion-associated Nef proteins are cleaved by the viral protease to release the soluble C-terminal core protein. Nef is probably cleaved concomitantly with viral structural proteins on maturation of virus particles. In terms of processing, myristoylated. Phosphorylated on serine residues, probably by host PKCdelta and theta.

The protein resides in the host cell membrane. It is found in the virion. Its subcellular location is the secreted. The protein localises to the host Golgi apparatus membrane. Its function is as follows. Factor of infectivity and pathogenicity, required for optimal virus replication. Alters numerous pathways of T-lymphocyte function and down-regulates immunity surface molecules in order to evade host defense and increase viral infectivity. Alters the functionality of other immunity cells, like dendritic cells, monocytes/macrophages and NK cells. Functionally, in infected CD4(+) T-lymphocytes, down-regulates the surface MHC-I, mature MHC-II, CD4, CD28, CCR5 and CXCR4 molecules. Mediates internalization and degradation of host CD4 through the interaction of with the cytoplasmic tail of CD4, the recruitment of AP-2 (clathrin adapter protein complex 2), internalization through clathrin coated pits, and subsequent transport to endosomes and lysosomes for degradation. Diverts host MHC-I molecules to the trans-Golgi network-associated endosomal compartments by an endocytic pathway to finally target them for degradation. MHC-I down-regulation may involve AP-1 (clathrin adapter protein complex 1) or possibly Src family kinase-ZAP70/Syk-PI3K cascade recruited by PACS2. In consequence infected cells are masked for immune recognition by cytotoxic T-lymphocytes. Decreasing the number of immune receptors also prevents reinfection by more HIV particles (superinfection). Down-regulates host SERINC3 and SERINC5 thereby excluding these proteins from the viral particles. Virion infectivity is drastically higher when SERINC3 or SERINC5 are excluded from the viral envelope, because these host antiviral proteins impair the membrane fusion event necessary for subsequent virion penetration. Bypasses host T-cell signaling by inducing a transcriptional program nearly identical to that of anti-CD3 cell activation. Interaction with TCR-zeta chain up-regulates the Fas ligand (FasL). Increasing surface FasL molecules and decreasing surface MHC-I molecules on infected CD4(+) cells send attacking cytotoxic CD8+ T-lymphocytes into apoptosis. In terms of biological role, plays a role in optimizing the host cell environment for viral replication without causing cell death by apoptosis. Protects the infected cells from apoptosis in order to keep them alive until the next virus generation is ready to strike. Inhibits the Fas and TNFR-mediated death signals by blocking MAP3K5/ASK1. Decreases the half-life of TP53, protecting the infected cell against p53-mediated apoptosis. Inhibits the apoptotic signals regulated by the Bcl-2 family proteins through the formation of a Nef/PI3-kinase/PAK2 complex that leads to activation of PAK2 and induces phosphorylation of host BAD. Its function is as follows. Extracellular Nef protein targets CD4(+) T-lymphocytes for apoptosis by interacting with CXCR4 surface receptors. The polypeptide is Protein Nef (Human immunodeficiency virus type 1 group M subtype F1 (isolate VI850) (HIV-1)).